We begin with the raw amino-acid sequence, 233 residues long: Sugar fermentation stimulation protein homolog (233 aa).

The protein belongs to the SfsA family.

This chain is Sugar fermentation stimulation protein homolog, found in Chelativorans sp. (strain BNC1).